We begin with the raw amino-acid sequence, 239 residues long: Uridylate kinase (239 aa).

12 to 15 (KLSG) serves as a coordination point for ATP. The segment at 20–25 (GDQGAG) is involved in allosteric activation by GTP. Residue Gly-54 coordinates UMP. ATP-binding residues include Gly-55 and Arg-59. UMP-binding positions include Asp-74 and 135 to 142 (TGNPFFTT). Thr-162, Tyr-168, and Asp-171 together coordinate ATP.

This sequence belongs to the UMP kinase family. Homohexamer.

The protein localises to the cytoplasm. It catalyses the reaction UMP + ATP = UDP + ADP. The protein operates within pyrimidine metabolism; CTP biosynthesis via de novo pathway; UDP from UMP (UMPK route): step 1/1. Its activity is regulated as follows. Allosterically activated by GTP. Inhibited by UTP. In terms of biological role, catalyzes the reversible phosphorylation of UMP to UDP. The protein is Uridylate kinase of Methylococcus capsulatus (strain ATCC 33009 / NCIMB 11132 / Bath).